Reading from the N-terminus, the 391-residue chain is Ferrochelatase (391 aa).

2 residues coordinate Fe cation: His-196 and Glu-281.

This sequence belongs to the ferrochelatase family.

It is found in the cytoplasm. The catalysed reaction is heme b + 2 H(+) = protoporphyrin IX + Fe(2+). It functions in the pathway porphyrin-containing compound metabolism; protoheme biosynthesis; protoheme from protoporphyrin-IX: step 1/1. Functionally, catalyzes the ferrous insertion into protoporphyrin IX. The chain is Ferrochelatase from Prochlorococcus marinus (strain SARG / CCMP1375 / SS120).